A 332-amino-acid polypeptide reads, in one-letter code: Malate dehydrogenase, cytoplasmic (332 aa).

Residues 16–17 (QI), aspartate 43, and glycine 90 contribute to the NAD(+) site. Arginine 99 provides a ligand contact to oxaloacetate. Positions 113 and 132 each coordinate NAD(+). Asparagine 132, arginine 163, histidine 188, and serine 243 together coordinate oxaloacetate. Histidine 188 functions as the Proton acceptor in the catalytic mechanism.

Belongs to the LDH/MDH superfamily. MDH type 2 family. In terms of assembly, monomer. As to expression, expressed constitutively in roots.

The protein localises to the cell membrane. The enzyme catalyses (S)-malate + NAD(+) = oxaloacetate + NADH + H(+). In terms of biological role, malate dehydrogenase; catalyzes a reversible NAD-dependent dehydrogenase reaction involved in central metabolism and redox homeostasis. This is Malate dehydrogenase, cytoplasmic from Zea mays (Maize).